A 695-amino-acid polypeptide reads, in one-letter code: ATP-dependent zinc metalloprotease FTSH 2, chloroplastic (695 aa).

The N-terminal 47 residues, 1–47 (MAASSACLVGNGLSVNTTTKQRLSKHFSGRQTSFSSVIRTSKVNVVK), are a transit peptide targeting the chloroplast. The transit peptide at 48–82 (ASLDGKKKQEGRRDFLKILLGNAGVGLVASGKANA) directs the protein to the thylakoid. Residues 83 to 167 (DEQGVSSSRM…AHNAQEDQGS (85 aa)) are Lumenal, thylakoid-facing. Residues 168–188 (VLFNLIGNLAFPALLIGGLFL) form a helical membrane-spanning segment. Residues 189-695 (LSRRSGGGMG…PASAPTPAAV (507 aa)) are Stromal-facing. Residue 267–274 (GPPGTGKT) participates in ATP binding. His-488 serves as a coordination point for Zn(2+). Glu-489 is a catalytic residue. The Zn(2+) site is built by His-492 and Asp-566. Residues 673-695 (PPENRVPSSTTTTPASAPTPAAV) form a disordered region. Residues 679–695 (PSSTTTTPASAPTPAAV) are compositionally biased toward low complexity.

The protein in the N-terminal section; belongs to the AAA ATPase family. It in the C-terminal section; belongs to the peptidase M41 family. In terms of assembly, interacts with CHIP and FTSH5. Heterohexamers with FTSH1, FTSH5 and FTSH8. May also form homooligomers. Requires Zn(2+) as cofactor. In terms of processing, the FTSH2 precursor is ubiquitinated by CHIP in the cytoplasm. Expressed in cotyledons, cauline and rosette leaves, stems, sepals, flovers and siliques. Very low in roots.

The protein resides in the plastid. It is found in the chloroplast thylakoid membrane. Functionally, part of a complex that function as an ATP-dependent zinc metallopeptidase. Involved in the thylakoid formation and in the removal of damaged D1 in the photosystem II, preventing cell death under high-intensity light conditions, but not involved in thermotolerance. This chain is ATP-dependent zinc metalloprotease FTSH 2, chloroplastic (FTSH2), found in Arabidopsis thaliana (Mouse-ear cress).